Consider the following 218-residue polypeptide: Small ribosomal subunit protein uS3c (218 aa).

The KH type-2 domain occupies 47 to 118; sequence VQKNMRTSSG…KLNIAVTRIA (72 aa).

Belongs to the universal ribosomal protein uS3 family. Part of the 30S ribosomal subunit.

It localises to the plastid. It is found in the chloroplast. The protein is Small ribosomal subunit protein uS3c (rps3) of Solanum bulbocastanum (Wild potato).